A 209-amino-acid polypeptide reads, in one-letter code: Uracil phosphoribosyltransferase (209 aa).

5-phospho-alpha-D-ribose 1-diphosphate-binding positions include arginine 79, arginine 104, and 131-139 (DPMLATGVS). Uracil is bound by residues isoleucine 194 and 199–201 (GDA). Aspartate 200 is a 5-phospho-alpha-D-ribose 1-diphosphate binding site.

This sequence belongs to the UPRTase family. Mg(2+) is required as a cofactor.

It catalyses the reaction UMP + diphosphate = 5-phospho-alpha-D-ribose 1-diphosphate + uracil. Its pathway is pyrimidine metabolism; UMP biosynthesis via salvage pathway; UMP from uracil: step 1/1. With respect to regulation, allosterically activated by GTP. Functionally, catalyzes the conversion of uracil and 5-phospho-alpha-D-ribose 1-diphosphate (PRPP) to UMP and diphosphate. The chain is Uracil phosphoribosyltransferase from Thermotoga petrophila (strain ATCC BAA-488 / DSM 13995 / JCM 10881 / RKU-1).